We begin with the raw amino-acid sequence, 334 residues long: Ketol-acid reductoisomerase (NADP(+)) (334 aa).

The region spanning 1-181 is the KARI N-terminal Rossmann domain; that stretch reads MTTVYYDQDV…GATRAGVIET (181 aa). NADP(+)-binding positions include 25–28, Arg48, Ser52, and 82–85; these read YGSQ and DEIQ. His107 is a catalytic residue. Gly133 is a binding site for NADP(+). Residues 182 to 327 enclose the KARI C-terminal knotted domain; sequence TFKEETETDL…RELREMMPFI (146 aa). Positions 190, 194, 226, and 230 each coordinate Mg(2+). Ser251 is a substrate binding site.

Belongs to the ketol-acid reductoisomerase family. Mg(2+) serves as cofactor.

The enzyme catalyses (2R)-2,3-dihydroxy-3-methylbutanoate + NADP(+) = (2S)-2-acetolactate + NADPH + H(+). It carries out the reaction (2R,3R)-2,3-dihydroxy-3-methylpentanoate + NADP(+) = (S)-2-ethyl-2-hydroxy-3-oxobutanoate + NADPH + H(+). Its pathway is amino-acid biosynthesis; L-isoleucine biosynthesis; L-isoleucine from 2-oxobutanoate: step 2/4. It functions in the pathway amino-acid biosynthesis; L-valine biosynthesis; L-valine from pyruvate: step 2/4. Functionally, involved in the biosynthesis of branched-chain amino acids (BCAA). Catalyzes an alkyl-migration followed by a ketol-acid reduction of (S)-2-acetolactate (S2AL) to yield (R)-2,3-dihydroxy-isovalerate. In the isomerase reaction, S2AL is rearranged via a Mg-dependent methyl migration to produce 3-hydroxy-3-methyl-2-ketobutyrate (HMKB). In the reductase reaction, this 2-ketoacid undergoes a metal-dependent reduction by NADPH to yield (R)-2,3-dihydroxy-isovalerate. The polypeptide is Ketol-acid reductoisomerase (NADP(+)) (Staphylococcus aureus (strain Mu3 / ATCC 700698)).